The primary structure comprises 141 residues: Ribosome maturation factor RimP (141 aa).

The protein belongs to the RimP family.

It localises to the cytoplasm. Its function is as follows. Required for maturation of 30S ribosomal subunits. The sequence is that of Ribosome maturation factor RimP from Laribacter hongkongensis (strain HLHK9).